The following is a 280-amino-acid chain: Four and a half LIM domains protein 1 (280 aa).

At S2 the chain carries N-acetylserine. Residue K4 is modified to N6-acetyllysine. The segment at 7 to 31 (CHYCRDPLQGKKYVQKDGRHCCLKC) adopts a C4-type zinc-finger fold. 4 consecutive LIM zinc-binding domains span residues 40–92 (CVEC…CNKC), 101–153 (CKGC…CVTC), 162–212 (CVKC…CVDC), and 221–276 (CAGC…CPDC). Residue K86 forms a Glycyl lysine isopeptide (Lys-Gly) (interchain with G-Cter in SUMO2) linkage.

The protein resides in the cytoplasm. Functionally, may have an involvement in muscle development or hypertrophy. Isoform 2 binds to RBP-J and plays a negative regulatory role in the RBP-J-mediated transcription in mammalian systems. This Rattus norvegicus (Rat) protein is Four and a half LIM domains protein 1 (Fhl1).